A 650-amino-acid polypeptide reads, in one-letter code: Laccase-like multicopper oxidase 1 (650 aa).

An N-terminal signal peptide occupies residues 1–20; it reads MLLSKLSILLAKWLSVAVYA. Plastocyanin-like domains follow at residues 41–151, 162–360, and 439–595; these read QVPS…IVED, ERIL…LRYN, and KPVL…VVGD. Residues cysteine 46 and cysteine 254 are joined by a disulfide bond. N-linked (GlcNAc...) asparagine glycans are attached at residues asparagine 55 and asparagine 83. Histidine 87, histidine 89, histidine 133, and histidine 135 together coordinate Cu cation. Cu cation-binding residues include histidine 501, histidine 504, histidine 506, histidine 576, cysteine 577, histidine 578, and histidine 582. An N-linked (GlcNAc...) asparagine glycan is attached at asparagine 620.

This sequence belongs to the multicopper oxidase family. Monomer. N-glycosylation Asn-55 and Asn-83 is involved in folding, conformational stability and laccase activity.

It catalyses the reaction 2 2',3,4-trihydroxy-trans-chalcone + O2 + 2 H(+) = 2 3',4'-dihydroxyaurone + 2 H2O. With respect to regulation, retains almost half of its activity in presence of high salt concentrations up to 100 mM NaCl. Retains also more than 85% of its original activity in the presence of 1 mM EDTA, indicating a satisfactory resistance towards chelators, which is rare among metal-containing enzyme. The activity drops significantly in the presence of NaN(3) or SDS. Appears more active in the presence of methanol compared to ethanol, but acetone or DMSO addition severely affect remaining laccase activity. Yellow laccase-like multicopper oxidase that is able to oxidize a variety of phenolic compounds including standard laccase substrates such as 2'-azino-bis(3-ethylbenzothiazoline-6-sulphonic acid) (ABTS) and 2,6-dimethoxyphenol (2,6-DMP). The existence of an ortho-hydroxy group is crucial for oxidation since pyrogallol and catechol, which contain ortho-hydroxy groups, are readily oxidized, which is not the case for resorcinol and hydroquinone, that contain meta- and para-hydroxy groups, respectively. The same is also true for the existence of a methoxy group in an ortho-position, since 2,6-DMP, guaiacol and ferulic and caffeic acids are also rather easily oxidized compared with the corresponding unsubstituted compound. Can be used for the bioconversion of 2',3,4-trihy-droxychalcone to 3',4'-dihydroxy-aurone, a bioactive aurone recently shown to possess inhibitory activity against several isoforms of the histone deacetylase complex (HDAC). The protein is Laccase-like multicopper oxidase 1 of Thermothelomyces thermophilus (strain ATCC 42464 / BCRC 31852 / DSM 1799) (Sporotrichum thermophile).